A 574-amino-acid polypeptide reads, in one-letter code: Isocitrate dehydrogenase kinase/phosphatase (574 aa).

ATP-binding positions include 315–321 and Lys-336; that span reads APGIRGM. Asp-371 is an active-site residue.

Belongs to the AceK family.

It localises to the cytoplasm. It carries out the reaction L-seryl-[isocitrate dehydrogenase] + ATP = O-phospho-L-seryl-[isocitrate dehydrogenase] + ADP + H(+). Its function is as follows. Bifunctional enzyme which can phosphorylate or dephosphorylate isocitrate dehydrogenase (IDH) on a specific serine residue. This is a regulatory mechanism which enables bacteria to bypass the Krebs cycle via the glyoxylate shunt in response to the source of carbon. When bacteria are grown on glucose, IDH is fully active and unphosphorylated, but when grown on acetate or ethanol, the activity of IDH declines drastically concomitant with its phosphorylation. The polypeptide is Isocitrate dehydrogenase kinase/phosphatase (Escherichia coli O127:H6 (strain E2348/69 / EPEC)).